Reading from the N-terminus, the 90-residue chain is RNA-binding protein Hfq (90 aa).

The Sm domain maps to 11–71; sequence DVFLNSVRKT…ISTIMPAAPV (61 aa).

Belongs to the Hfq family. Homohexamer.

Functionally, RNA chaperone that binds small regulatory RNA (sRNAs) and mRNAs to facilitate mRNA translational regulation in response to envelope stress, environmental stress and changes in metabolite concentrations. Also binds with high specificity to tRNAs. The sequence is that of RNA-binding protein Hfq from Maricaulis maris (strain MCS10) (Caulobacter maris).